A 142-amino-acid chain; its full sequence is Hemoglobin subunit alpha (142 aa).

Positions 2-142 constitute a Globin domain; sequence VLSPADKTNV…VSTVLTSKYR (141 aa). At Ser4 the chain carries Phosphoserine. The residue at position 8 (Lys8) is an N6-succinyllysine. Thr9 is subject to Phosphothreonine. Residue Lys12 is modified to N6-succinyllysine. An N6-acetyllysine; alternate modification is found at Lys17. At Lys17 the chain carries N6-succinyllysine; alternate. Tyr25 is subject to Phosphotyrosine. At Ser36 the chain carries Phosphoserine. At Lys41 the chain carries N6-succinyllysine. A Phosphoserine modification is found at Ser50. His59 is a binding site for O2. A heme b-binding site is contributed by His88. Phosphoserine is present on Ser103. Position 109 is a phosphothreonine (Thr109). Ser125 bears the Phosphoserine mark. Residues Thr135 and Thr138 each carry the phosphothreonine modification. At Ser139 the chain carries Phosphoserine.

The protein belongs to the globin family. As to quaternary structure, heterotetramer of two alpha chains and two beta chains. As to expression, red blood cells.

Functionally, involved in oxygen transport from the lung to the various peripheral tissues. Its function is as follows. Hemopressin acts as an antagonist peptide of the cannabinoid receptor CNR1. Hemopressin-binding efficiently blocks cannabinoid receptor CNR1 and subsequent signaling. The polypeptide is Hemoglobin subunit alpha (HBA) (Ailuropoda melanoleuca (Giant panda)).